The primary structure comprises 91 residues: Ragulator complex protein LAMTOR5 homolog (91 aa).

The protein belongs to the LAMTOR5 family. As to quaternary structure, part of the Ragulator complex.

It localises to the cytoplasm. The protein resides in the lysosome. Functionally, regulator of the TOR pathway, a signaling cascade that promotes cell growth in response to growth factors, energy levels, and amino acids. As part of the Ragulator complex, may activate the TOR signaling cascade in response to amino acids. The chain is Ragulator complex protein LAMTOR5 homolog from Ixodes scapularis (Black-legged tick).